The chain runs to 156 residues: Small ribosomal subunit protein uS7 (156 aa).

It belongs to the universal ribosomal protein uS7 family. Part of the 30S ribosomal subunit. Contacts proteins S9 and S11.

In terms of biological role, one of the primary rRNA binding proteins, it binds directly to 16S rRNA where it nucleates assembly of the head domain of the 30S subunit. Is located at the subunit interface close to the decoding center, probably blocks exit of the E-site tRNA. The polypeptide is Small ribosomal subunit protein uS7 (Actinobacillus pleuropneumoniae serotype 5b (strain L20)).